We begin with the raw amino-acid sequence, 125 residues long: Fluoride-specific ion channel FluC (125 aa).

4 helical membrane-spanning segments follow: residues Pro4 to Val24, Gly36 to Ala56, Leu68 to Val88, and Val100 to Leu120. Gly75 and Thr78 together coordinate Na(+).

This sequence belongs to the fluoride channel Fluc/FEX (TC 1.A.43) family.

Its subcellular location is the cell inner membrane. It catalyses the reaction fluoride(in) = fluoride(out). Its activity is regulated as follows. Na(+) is not transported, but it plays an essential structural role and its presence is essential for fluoride channel function. Fluoride-specific ion channel. Important for reducing fluoride concentration in the cell, thus reducing its toxicity. This chain is Fluoride-specific ion channel FluC, found in Erwinia tasmaniensis (strain DSM 17950 / CFBP 7177 / CIP 109463 / NCPPB 4357 / Et1/99).